Here is a 319-residue protein sequence, read N- to C-terminus: MTSQPQVRHFLADDDLTPAEQAEVLTLAAKLKAAPFSERPLEGPKSVAVLFDKTSTRTRFSFDAGIAHLGGHAIVVDSGSSQMGKGESLQDTAAVLSRYVEAIVWRTYAHSNFHAMAETSTVPLVNSLSDDLHPCQILADLQTIVENLSPEEGPAGLKGKKAVYLGDGDNNMANSYMIGFATAGMDISIIAPEGFQPRAEFVERAEKRGQETGAKVVVTDSLDEVAGADVVITDTWVSMGMENDGIDRTTPFVPYQVNDEVMAKANDGAIFLHCLPAYRGKEVAASVIDGPASKVFDEAENRLHAQKALLVWLLANQPR.

Carbamoyl phosphate is bound by residues 55–58 (STRT), Q82, R106, and 133–136 (HPCQ). Residues N171, D234, and 238 to 239 (SM) each bind L-ornithine. Residues 274–275 (CL) and R302 contribute to the carbamoyl phosphate site.

It belongs to the aspartate/ornithine carbamoyltransferase superfamily. OTCase family.

Its subcellular location is the cytoplasm. The enzyme catalyses carbamoyl phosphate + L-ornithine = L-citrulline + phosphate + H(+). Its pathway is amino-acid biosynthesis; L-arginine biosynthesis; L-arginine from L-ornithine and carbamoyl phosphate: step 1/3. In terms of biological role, reversibly catalyzes the transfer of the carbamoyl group from carbamoyl phosphate (CP) to the N(epsilon) atom of ornithine (ORN) to produce L-citrulline. This chain is Ornithine carbamoyltransferase (argF), found in Corynebacterium glutamicum (strain ATCC 13032 / DSM 20300 / JCM 1318 / BCRC 11384 / CCUG 27702 / LMG 3730 / NBRC 12168 / NCIMB 10025 / NRRL B-2784 / 534).